The following is a 317-amino-acid chain: Ferrochelatase (317 aa).

Residues His-192 and Glu-271 each coordinate Fe cation.

The protein belongs to the ferrochelatase family.

The protein localises to the cytoplasm. The enzyme catalyses heme b + 2 H(+) = protoporphyrin IX + Fe(2+). Its pathway is porphyrin-containing compound metabolism; protoheme biosynthesis; protoheme from protoporphyrin-IX: step 1/1. Catalyzes the ferrous insertion into protoporphyrin IX. This is Ferrochelatase from Geobacter sp. (strain M21).